The primary structure comprises 706 residues: Sodium- and chloride-dependent glycine transporter 1 (706 aa).

A disordered region spans residues 1–26 (MSGGDTRAAIARPRMAAAHGPVAPSS). At 1–108 (MSGGDTRAAI…KRGNWGNQIE (108 aa)) the chain is on the cytoplasmic side. A compositionally biased stretch (low complexity) spans 7 to 18 (RAAIARPRMAAA). The next 3 helical transmembrane spans lie at 109-129 (FVLT…FPYL), 136-156 (GAFM…LFFM), and 188-208 (VSTY…YYFF). At 209–285 (SSMTHVLPWA…LSDDIGNFGE (77 aa)) the chain is on the extracellular side. The next 9 helical transmembrane spans lie at 286–306 (VRLP…LCLI), 315–335 (VVYF…VRGV), 360–380 (VWGD…GGLI), 407–427 (SVYA…HLGV), 450–470 (LLPI…LLGL), 506–526 (VAGF…WLLL), 530–550 (YAAS…IMYI), 570–590 (LFFQ…ILVF), and 610–630 (VAIG…YAMF). Over 631–706 (RLCRTDGDTL…GSSRLQDSRI (76 aa)) the chain is Cytoplasmic. S673 and S698 each carry phosphoserine. An essential for interaction with EXOC1 region spans residues 695-706 (SNGSSRLQDSRI).

It belongs to the sodium:neurotransmitter symporter (SNF) (TC 2.A.22) family. SLC6A9 subfamily. As to quaternary structure, interacts with EXOC1; interaction increases the transporter capacity of SLC6A9 probably by promoting its insertion into the cell membrane. Interacts with EXOC3 and EXOC4. As to expression, expressed in the brain, kidney, pancreas, lung, placenta and liver. In terms of tissue distribution, expressed only in the brain.

Its subcellular location is the cell membrane. The enzyme catalyses glycine(out) + chloride(out) + 2 Na(+)(out) = glycine(in) + chloride(in) + 2 Na(+)(in). Inhibited by sarcosine. Functionally, sodium- and chloride-dependent glycine transporter. Essential for regulating glycine concentrations at inhibitory glycinergic synapses. Sodium- and chloride-dependent glycine transporter. This is Sodium- and chloride-dependent glycine transporter 1 (SLC6A9) from Homo sapiens (Human).